The chain runs to 887 residues: 3-hydroxy-3-methylglutaryl-coenzyme A reductase (887 aa).

Residues 1–9 (MLSRLFRMH) are Cytoplasmic-facing. A helical membrane pass occupies residues 10-39 (GLFVASHPWEVIVGTVTLTICMMSMNMFTG). Residues 40-56 (NNKICGWNYECPKFEED) are Lumenal-facing. A helical transmembrane segment spans residues 57–78 (VLSSDIIILTITRCIAILYIYF). Residues 61-218 (DIIILTITRC…MTFFPACVSL (158 aa)) form the SSD domain. The INSIG-binding motif motif lies at 75 to 78 (YIYF). Over 79–89 (QFQNLRQLGSK) the chain is Cytoplasmic. Lys-89 is covalently cross-linked (Glycyl lysine isopeptide (Lys-Gly) (interchain with G-Cter in ubiquitin)). A helical transmembrane segment spans residues 90–114 (YILGIAGLFTIFSSFVFSTVVIHFL). The Lumenal portion of the chain corresponds to 115–123 (DKELTGLNE). A helical transmembrane segment spans residues 124 to 149 (ALPFFLLLIDLSRASALAKFALSSNS). At 150–159 (QDEVRENIAR) the chain is on the cytoplasmic side. The helical transmembrane segment at 160–187 (GMAILGPTFTLDALVECLVIGVGTMSGV) threads the bilayer. The Lumenal portion of the chain corresponds to 188 to 191 (RQLE). A helical transmembrane segment spans residues 192 to 220 (IMCCFGCMSVLANYFVFMTFFPACVSLVL). Topologically, residues 221–248 (ELSRESREGRPIWQLSHFARVLEEEENK) are cytoplasmic. Lys-248 participates in a covalent cross-link: Glycyl lysine isopeptide (Lys-Gly) (interchain with G-Cter in ubiquitin). The chain crosses the membrane as a helical span at residues 249-275 (PNPVTQRVKMIMSLGLVLVHAHSRWIA). At 276–314 (DPSPQNSTTEHSKVSLGLDEDVSKRIEPSVSLWQFYLSK) the chain is on the lumenal side. Asn-281 carries an N-linked (GlcNAc...) asparagine glycan. The chain crosses the membrane as a helical span at residues 315–339 (MISMDIEQVVTLSLAFLLAVKYIFF). The Cytoplasmic portion of the chain corresponds to 340-887 (EQAETESTLS…LQGTCTKKAA (548 aa)). Residues Glu-558, Lys-690, and Asp-766 each act as charge relay system in the active site. The active-site Proton donor is His-865. Position 871 is a phosphoserine; by AMPK (Ser-871).

This sequence belongs to the HMG-CoA reductase family. As to quaternary structure, homotetramer. Homodimer. Interacts (via its SSD) with INSIG1; the interaction, accelerated by sterols, leads to the recruitment of HMGCR to AMFR/gp78 for its ubiquitination by the sterol-mediated ERAD pathway. Interacts with UBIAD1. Post-translationally, undergoes sterol-mediated ubiquitination and ER-associated degradation (ERAD). Accumulation of sterols in the endoplasmic reticulum (ER) membrane, triggers binding of the reductase to the ER membrane protein INSIG1 or INSIG2. The INSIG1 binding leads to the recruitment of the ubiquitin ligase, AMFR/gp78, RNF139 or RNF145, initiating ubiquitination of the reductase. The ubiquitinated reductase is then extracted from the ER membrane and delivered to cytosolic 26S proteosomes by a mechanism probably mediated by the ATPase Valosin-containing protein VCP/p97. The INSIG2-binding leads to the recruitment of the ubiquitin ligase RNF139, initiating ubiquitination of the reductase. Lys-248 is the main site of ubiquitination. Ubiquitination is enhanced by the presence of a geranylgeranylated protein. In terms of processing, N-glycosylated. Deglycosylated by NGLY1 on release from the endoplasmic reticulum (ER) in a sterol-mediated manner. Phosphorylated. Phosphorylation at Ser-871 reduces the catalytic activity.

Its subcellular location is the endoplasmic reticulum membrane. It localises to the peroxisome membrane. It carries out the reaction (R)-mevalonate + 2 NADP(+) + CoA = (3S)-3-hydroxy-3-methylglutaryl-CoA + 2 NADPH + 2 H(+). It functions in the pathway metabolic intermediate biosynthesis; (R)-mevalonate biosynthesis; (R)-mevalonate from acetyl-CoA: step 3/3. With respect to regulation, regulated by a negative feedback mechanism through sterols and non-sterol metabolites derived from mevalonate. Phosphorylation at Ser-871 down-regulates the catalytic activity. Functionally, catalyzes the conversion of (3S)-hydroxy-3-methylglutaryl-CoA (HMG-CoA) to mevalonic acid, the rate-limiting step in the synthesis of cholesterol and other isoprenoids, thus plays a critical role in cellular cholesterol homeostasis. The chain is 3-hydroxy-3-methylglutaryl-coenzyme A reductase (HMGCR) from Mesocricetus auratus (Golden hamster).